The primary structure comprises 102 residues: Small integral membrane protein 29 (102 aa).

Residue asparagine 3 is glycosylated (N-linked (GlcNAc...) asparagine). The helical transmembrane segment at 21–41 (VLGPFFLITLVGVVVAVVMYV) threads the bilayer.

In terms of tissue distribution, expressed in spleen, thymus, prostate, testis, uterus, small intestine, colon and peripheral blood leukocytes.

It localises to the membrane. The protein is Small integral membrane protein 29 of Homo sapiens (Human).